Consider the following 152-residue polypeptide: MHIDALSRRLIDRYQHGMPLCAEPYRAMAEELGCSEGEVLACLEQLQEDGGLSRIGPVFEHSRAGASTLVALAVPEARLEQVAARINAFPEVNHNYLREHRYNLWFVLTGPDRAHIDALLAEIEADTGLVPLDLPMLHAFRIDLGFPLGDPS.

It belongs to the Ahb/Nir family. Probably forms a complex composed of NirD, NirL, NirG and NirH. All proteins are required for the total conversion of siroheme to didecarboxysiroheme.

The enzyme catalyses siroheme + 2 H(+) = 12,18-didecarboxysiroheme + 2 CO2. The protein operates within porphyrin-containing compound metabolism. Involved in heme d1 biosynthesis. Catalyzes the decarboxylation of siroheme into didecarboxysiroheme. The chain is Siroheme decarboxylase NirD subunit from Stutzerimonas stutzeri (Pseudomonas stutzeri).